Here is a 356-residue protein sequence, read N- to C-terminus: MITKQQVLEFLKNYDLENITIATICSHSSLQIFDGARKEGFRTLGICVGKPPKFYEAFPKAKPDEYLVVDSYADIMNKAEELRQKNTIIIPHGSVVAYLGTENFADMAVPTFGNRAVLEWESDRDKEREWLLGAGIHMPGKVDDPHDINGPVMVKYDGAKGGKGFFVAKTYEEFEELIDRTQKYTIQEFITGTRYYLHYFYSPIRNEGYTLSKGSLELLSMDRRVESNADEIFRLGSPRELVGAGIRPTYVVTGNMPLVARESLLPLIFSLGERVVEESLGLFGGMIGSFCLETVFTDTLEIKVFEISARIVAGTNLYISGSPYADLMEENLSTGRRIAREIKIAAQTGQLDKIIS.

2 residues coordinate 5-amino-1-(5-phospho-beta-D-ribosyl)imidazole-4-carboxamide: His27 and Ser94. Residues 101–333 enclose the ATP-grasp domain; it reads TENFADMAVP…YADLMEENLS (233 aa). ATP contacts are provided by residues 145–196 and Glu226; that span reads PHDI…TRYY. 5-amino-1-(5-phospho-beta-D-ribosyl)imidazole-4-carboxamide is bound at residue Asn255. Mg(2+) is bound by residues Glu293 and Glu306.

Belongs to the phosphohexose mutase family. Requires Mg(2+) as cofactor. It depends on Mn(2+) as a cofactor.

It catalyses the reaction 5-amino-1-(5-phospho-beta-D-ribosyl)imidazole-4-carboxamide + formate + ATP = 5-formamido-1-(5-phospho-D-ribosyl)imidazole-4-carboxamide + ADP + phosphate. Its pathway is purine metabolism; IMP biosynthesis via de novo pathway; 5-formamido-1-(5-phospho-D-ribosyl)imidazole-4-carboxamide from 5-amino-1-(5-phospho-D-ribosyl)imidazole-4-carboxamide (formate route): step 1/1. In terms of biological role, catalyzes the ATP- and formate-dependent formylation of 5-aminoimidazole-4-carboxamide-1-beta-d-ribofuranosyl 5'-monophosphate (AICAR) to 5-formaminoimidazole-4-carboxamide-1-beta-d-ribofuranosyl 5'-monophosphate (FAICAR) in the absence of folates. This is 5-formaminoimidazole-4-carboxamide-1-(beta)-D-ribofuranosyl 5'-monophosphate synthetase from Methanosarcina barkeri (strain Fusaro / DSM 804).